A 331-amino-acid polypeptide reads, in one-letter code: UPF0324 membrane protein SERP0111 (331 aa).

The next 10 helical transmembrane spans lie at 7–26, 31–48, 69–88, 93–115, 122–144, 154–176, 183–205, 249–271, 275–297, and 308–330; these read ASFMKGIMFTFTIAIISYIL, ILHTIGALAIAIIFAMIY, LLKFAIILYGLKLNMGDILG, LLLIDIIVIIFSISLTLLLNQII, SILLGIGTGVCGAAAIAATAPIL, SVGIIALVGTIFALIYTAIEAIF, YGAWTGISLHEIAQVVLAAGIGG, IPYFLIGFIIMACINTFVPIPSL, IINVITTLCMLMAMVALGLNIVL, and FIVICITSICLSGVTLLVTSIMF.

This sequence belongs to the UPF0324 family.

It is found in the cell membrane. The sequence is that of UPF0324 membrane protein SERP0111 from Staphylococcus epidermidis (strain ATCC 35984 / DSM 28319 / BCRC 17069 / CCUG 31568 / BM 3577 / RP62A).